We begin with the raw amino-acid sequence, 587 residues long: Phosphomethylpyrimidine synthase (587 aa).

The interval 1–58 (MTPTQNEIHPKHSYSPIRKDGLEVPETEIRLDDSPSGPNEPFRIYRTRGPETNPKQGL) is disordered. Residues 17 to 33 (IRKDGLEVPETEIRLDD) are compositionally biased toward basic and acidic residues. Substrate is bound by residues Asn180, Met209, Tyr238, His274, 294–296 (SRG), 335–338 (DGLR), and Glu374. His378 is a Zn(2+) binding site. Tyr401 is a substrate binding site. His442 serves as a coordination point for Zn(2+). 3 residues coordinate [4Fe-4S] cluster: Cys522, Cys525, and Cys530.

This sequence belongs to the ThiC family. [4Fe-4S] cluster serves as cofactor.

It catalyses the reaction 5-amino-1-(5-phospho-beta-D-ribosyl)imidazole + S-adenosyl-L-methionine = 4-amino-2-methyl-5-(phosphooxymethyl)pyrimidine + CO + 5'-deoxyadenosine + formate + L-methionine + 3 H(+). It participates in cofactor biosynthesis; thiamine diphosphate biosynthesis. Its function is as follows. Catalyzes the synthesis of the hydroxymethylpyrimidine phosphate (HMP-P) moiety of thiamine from aminoimidazole ribotide (AIR) in a radical S-adenosyl-L-methionine (SAM)-dependent reaction. The polypeptide is Phosphomethylpyrimidine synthase (Corynebacterium glutamicum (strain ATCC 13032 / DSM 20300 / JCM 1318 / BCRC 11384 / CCUG 27702 / LMG 3730 / NBRC 12168 / NCIMB 10025 / NRRL B-2784 / 534)).